The primary structure comprises 347 residues: Protein pelota homolog (347 aa).

The protein belongs to the eukaryotic release factor 1 family. Pelota subfamily. In terms of assembly, monomer. Requires a divalent metal cation as cofactor.

It is found in the cytoplasm. May function in recognizing stalled ribosomes, interact with stem-loop structures in stalled mRNA molecules, and effect endonucleolytic cleavage of the mRNA. May play a role in the release non-functional ribosomes and degradation of damaged mRNAs. Has endoribonuclease activity. This Methanothrix thermoacetophila (strain DSM 6194 / JCM 14653 / NBRC 101360 / PT) (Methanosaeta thermophila) protein is Protein pelota homolog.